The chain runs to 487 residues: UDP-N-acetylmuramate--L-alanine ligase (487 aa).

Residue 129 to 135 coordinates ATP; it reads GTHGKTT.

The protein belongs to the MurCDEF family.

The protein localises to the cytoplasm. The enzyme catalyses UDP-N-acetyl-alpha-D-muramate + L-alanine + ATP = UDP-N-acetyl-alpha-D-muramoyl-L-alanine + ADP + phosphate + H(+). It participates in cell wall biogenesis; peptidoglycan biosynthesis. Cell wall formation. This Aliivibrio fischeri (strain ATCC 700601 / ES114) (Vibrio fischeri) protein is UDP-N-acetylmuramate--L-alanine ligase.